The following is a 136-amino-acid chain: DNA-directed RNA polymerase subunit omega (136 aa).

A compositionally biased stretch (low complexity) spans 90–102 (SSPAAAAVAPQSS). A disordered region spans residues 90-136 (SSPAAAAVAPQSSSDDKDVQFDRMSEEDLLRGLENLAPPTETDDEGE). Residues 103 to 120 (SDDKDVQFDRMSEEDLLR) show a composition bias toward basic and acidic residues.

The protein belongs to the RNA polymerase subunit omega family. As to quaternary structure, the RNAP catalytic core consists of 2 alpha, 1 beta, 1 beta' and 1 omega subunit. When a sigma factor is associated with the core the holoenzyme is formed, which can initiate transcription.

It carries out the reaction RNA(n) + a ribonucleoside 5'-triphosphate = RNA(n+1) + diphosphate. Its function is as follows. Promotes RNA polymerase assembly. Latches the N- and C-terminal regions of the beta' subunit thereby facilitating its interaction with the beta and alpha subunits. In Methylorubrum populi (strain ATCC BAA-705 / NCIMB 13946 / BJ001) (Methylobacterium populi), this protein is DNA-directed RNA polymerase subunit omega.